The primary structure comprises 191 residues: FMN-dependent NADH:quinone oxidoreductase 1 (191 aa).

FMN contacts are provided by residues Ser-10 and Ser-16–Ser-18.

The protein belongs to the azoreductase type 1 family. In terms of assembly, homodimer. FMN serves as cofactor.

The catalysed reaction is 2 a quinone + NADH + H(+) = 2 a 1,4-benzosemiquinone + NAD(+). The enzyme catalyses N,N-dimethyl-1,4-phenylenediamine + anthranilate + 2 NAD(+) = 2-(4-dimethylaminophenyl)diazenylbenzoate + 2 NADH + 2 H(+). Functionally, quinone reductase that provides resistance to thiol-specific stress caused by electrophilic quinones. Its function is as follows. Also exhibits azoreductase activity. Catalyzes the reductive cleavage of the azo bond in aromatic azo compounds to the corresponding amines. This is FMN-dependent NADH:quinone oxidoreductase 1 from Jannaschia sp. (strain CCS1).